A 252-amino-acid chain; its full sequence is Ribosomal RNA small subunit methyltransferase J (252 aa).

S-adenosyl-L-methionine is bound by residues arginine 101–aspartate 102, glutamate 117–arginine 118, serine 153–serine 154, and aspartate 171.

This sequence belongs to the methyltransferase superfamily. RsmJ family.

The protein resides in the cytoplasm. It carries out the reaction guanosine(1516) in 16S rRNA + S-adenosyl-L-methionine = N(2)-methylguanosine(1516) in 16S rRNA + S-adenosyl-L-homocysteine + H(+). In terms of biological role, specifically methylates the guanosine in position 1516 of 16S rRNA. The sequence is that of Ribosomal RNA small subunit methyltransferase J from Salmonella heidelberg (strain SL476).